We begin with the raw amino-acid sequence, 79 residues long: MAPPGGILFLLLLPVAAAQVTSGSCSGCGPLSLPLLAGLVAADAVVSLLIVVGVFVCGRPRSRPTQEDGKIYINMPGRG.

A signal peptide spans M1–A18. At Q19 to L35 the chain is on the extracellular side. Residues L36–V56 traverse the membrane as a helical segment. Residues C57–G79 lie on the Cytoplasmic side of the membrane. Y72 is modified (phosphotyrosine). Positions Y72 to N74 are GRB2 binding site. The interval Y72–M75 is PIK3R1 binding site.

Belongs to the DAP10 family. As to quaternary structure, homodimer; Disulfide-linked. Heterohexamer composed of four subunits of HCST/DAP10 and two subunits of KLRK1. Interacts (via transmembrane domain) with KLRK1 (via transmembrane domain); the interaction is required for KLRK1 NK cell surface and induces NK cell-mediated cytotoxicity. Interacts with PIK3R1 and GRB2. Interacts with CLEC5A. Forms an CLEC5A/TYROBP/HCST trimolecular complex depending almost solely on TYROBP. Interacts with KLRK1. Interacts with CD300H. Post-translationally, phosphorylated; PIK3R1 and GRB2 associate specifically with tyrosine-phosphorylated HCST. In terms of processing, O-glycosylated. In terms of tissue distribution, expressed predominantly in lymphohematopoietic tissues.

The protein resides in the membrane. Functionally, transmembrane adapter protein which associates with KLRK1 to form an activation receptor KLRK1-HCST in lymphoid and myeloid cells; this receptor plays a major role in triggering cytotoxicity against target cells expressing cell surface ligands such as MHC class I chain-related MICA and MICB, and UL16-binding proteins (ULBPs); these ligands are up-regulated by stress conditions and pathological state such as viral infection and tumor transformation. Functions as a docking site for PI3-kinase PIK3R1 and GRB2. Interaction of ULBPs with KLRK1-HCST triggers calcium mobilization and activation of the PIK3R1, MAP2K/ERK, and JAK2/STAT5 signaling pathways. Both PIK3R1 and GRB2 are required for full KLRK1-HCST-mediated activation and ultimate killing of target cells. In NK cells, KLRK1-HCST signaling directly induces cytotoxicity and enhances cytokine production initiated via DAP12/TYROBP-associated receptors. In T-cells, it provides primarily costimulation for TCR-induced signals. KLRK1-HCST receptor plays a role in immune surveillance against tumors and is required for cytolysis of tumors cells; indeed, melanoma cells that do not express KLRK1 ligands escape from immune surveillance mediated by NK cells. This is Hematopoietic cell signal transducer (HCST) from Sus scrofa (Pig).